Reading from the N-terminus, the 494-residue chain is BTB/POZ domain and ankyrin repeat-containing protein NH5.1 (494 aa).

Residues 25–130 form the BTB domain; sequence SDVAFSVEGR…LYSGQASVAA (106 aa). The disordered stretch occupies residues 60–94; it reads NHQPPPPPPPLNWPMAGGGGGGSGGGGRGGAGGGG. Pro residues predominate over residues 61–71; the sequence is HQPPPPPPPLN. The segment covering 75-94 has biased composition (gly residues); the sequence is AGGGGGGSGGGGRGGAGGGG. The C2HC NPR-type zinc-finger motif lies at 136–150; it reads LPGCGARGCWHTRCG. Zn(2+)-binding residues include cysteine 139, cysteine 144, histidine 146, and cysteine 149. 4 ANK repeats span residues 274–302, 303–333, 338–367, and 371–405; these read NKIRRMRRALDAADIELVKLMVMGEGLDL, DDALAVHYAVQHCNRDVVKALLELGAADVNS, TGKTALHLAAEMVSPDMVSVLLDHHADPNS, and DGVTPLDVLRSLTSEFLFKGAVPGLTHIEPNKLRL. 2 disordered regions span residues 421 to 443 and 469 to 494; these read DGAPVTGGAEAGGSDGGNFPRSD and AAGEGRKSNNGRGSPPPAMYFPNGFA.

The protein belongs to the plant 'ANKYRIN-BTB/POZ' family. 'NOOT-BOP-COCH-like' (NBCL) subfamily. As to quaternary structure, homodimer. Interacts with TGAL5, TGAL7, TGAL8 and TGAL9.

It localises to the nucleus. Its subcellular location is the cytoplasm. The protein operates within protein modification; protein ubiquitination. In terms of biological role, may act as a substrate-specific adapter of an E3 ubiquitin-protein ligase complex (CUL3-RBX1-BTB) which mediates the ubiquitination and subsequent proteasomal degradation of target proteins. Transcriptional co-regulator involved in the promotion of leaf and floral meristem fate and determinacy. Required for the abscission of senescent organs, probably by regulating the cell wall disorganization in abscission zones (AZs, e.g. pulvini at the base of leaves). This is BTB/POZ domain and ankyrin repeat-containing protein NH5.1 from Oryza sativa subsp. japonica (Rice).